Consider the following 248-residue polypeptide: 1-(5-phosphoribosyl)-5-[(5-phosphoribosylamino)methylideneamino] imidazole-4-carboxamide isomerase (248 aa).

D8 acts as the Proton acceptor in catalysis. D130 acts as the Proton donor in catalysis.

This sequence belongs to the HisA/HisF family.

It localises to the cytoplasm. It catalyses the reaction 1-(5-phospho-beta-D-ribosyl)-5-[(5-phospho-beta-D-ribosylamino)methylideneamino]imidazole-4-carboxamide = 5-[(5-phospho-1-deoxy-D-ribulos-1-ylimino)methylamino]-1-(5-phospho-beta-D-ribosyl)imidazole-4-carboxamide. Its pathway is amino-acid biosynthesis; L-histidine biosynthesis; L-histidine from 5-phospho-alpha-D-ribose 1-diphosphate: step 4/9. The chain is 1-(5-phosphoribosyl)-5-[(5-phosphoribosylamino)methylideneamino] imidazole-4-carboxamide isomerase from Alkalilimnicola ehrlichii (strain ATCC BAA-1101 / DSM 17681 / MLHE-1).